The following is a 424-amino-acid chain: Probable methyltransferase EP424R (424 aa).

In terms of domain architecture, Adrift-type SAM-dependent 2'-O-MTase spans glutamine 103–arginine 315. S-adenosyl-L-methionine contacts are provided by glycine 135 and aspartate 228. Catalysis depends on lysine 268, which acts as the Proton acceptor.

It localises to the virion. The chain is Probable methyltransferase EP424R from Ornithodoros (relapsing fever ticks).